The following is a 55-amino-acid chain: Ferredoxin (55 aa).

4Fe-4S ferredoxin-type domains are found at residues 2–27 (YFIT…SPGD) and 28–55 (SVYV…PQQK). The [4Fe-4S] cluster site is built by Cys-8, Cys-11, Cys-14, Cys-18, Cys-37, Cys-40, Cys-43, and Cys-47.

It depends on [4Fe-4S] cluster as a cofactor.

In terms of biological role, ferredoxins are iron-sulfur proteins that transfer electrons in a wide variety of metabolic reactions. The sequence is that of Ferredoxin from Acetivibrio thermocellus (Hungateiclostridium thermocellum).